A 329-amino-acid polypeptide reads, in one-letter code: Phosphate acyltransferase (329 aa).

This sequence belongs to the PlsX family. Homodimer. Probably interacts with PlsY.

The protein localises to the cytoplasm. The enzyme catalyses a fatty acyl-[ACP] + phosphate = an acyl phosphate + holo-[ACP]. It functions in the pathway lipid metabolism; phospholipid metabolism. In terms of biological role, catalyzes the reversible formation of acyl-phosphate (acyl-PO(4)) from acyl-[acyl-carrier-protein] (acyl-ACP). This enzyme utilizes acyl-ACP as fatty acyl donor, but not acyl-CoA. In Anoxybacillus flavithermus (strain DSM 21510 / WK1), this protein is Phosphate acyltransferase.